We begin with the raw amino-acid sequence, 138 residues long: MLVIKMLFKYQIKTNKREELVDITPYIISAISESKVKDGIAVIYVPHTTAGITINENADPSVKHDIINFLSHLIPKNWNFTHLEGNSDAHIKSSLVGCSQTIIIKDGKPLLGTWQGIFFAEFDGPRRREFYVKIIGDK.

The protein belongs to the UPF0047 family.

In Methanocaldococcus jannaschii (strain ATCC 43067 / DSM 2661 / JAL-1 / JCM 10045 / NBRC 100440) (Methanococcus jannaschii), this protein is UPF0047 protein MJ1081.